The chain runs to 250 residues: Keratin-associated protein 9-1 (250 aa).

32 tandem repeats follow at residues 8-12, 13-17, 18-22, 37-41, 42-46, 51-55, 56-60, 61-65, 66-70, 75-79, 80-84, 85-89, 90-94, 95-99, 105-109, 114-117, 118-121, 133-137, 138-142, 143-147, 153-157, 162-166, 167-171, 176-180, 185-189, 190-194, 214-218, 219-223, 229-233, 234-238, 239-243, and 244-248. The 32 X 5 AA repeats of C-C-[CGSVRQH]-[SQTNP]-[PTSI] stretch occupies residues 8–248; the sequence is CCQPTCCRTT…CCVSSCCQPS (241 aa).

This sequence belongs to the KRTAP type 9 family. Interacts with hair keratins.

Functionally, in the hair cortex, hair keratin intermediate filaments are embedded in an interfilamentous matrix, consisting of hair keratin-associated proteins (KRTAP), which are essential for the formation of a rigid and resistant hair shaft through their extensive disulfide bond cross-linking with abundant cysteine residues of hair keratins. The matrix proteins include the high-sulfur and high-glycine-tyrosine keratins. The protein is Keratin-associated protein 9-1 of Homo sapiens (Human).